A 404-amino-acid polypeptide reads, in one-letter code: Cysteine desulfurase IscS (404 aa).

Residues 75–76 (AT), Asn-155, Gln-183, and 203–205 (SAH) each bind pyridoxal 5'-phosphate. Lys-206 bears the N6-(pyridoxal phosphate)lysine mark. Thr-243 contacts pyridoxal 5'-phosphate. Residue Cys-328 is the Cysteine persulfide intermediate of the active site. Cys-328 serves as a coordination point for [2Fe-2S] cluster.

This sequence belongs to the class-V pyridoxal-phosphate-dependent aminotransferase family. NifS/IscS subfamily. Homodimer. Forms a heterotetramer with IscU, interacts with other sulfur acceptors. The cofactor is pyridoxal 5'-phosphate.

It is found in the cytoplasm. It carries out the reaction (sulfur carrier)-H + L-cysteine = (sulfur carrier)-SH + L-alanine. The protein operates within cofactor biosynthesis; iron-sulfur cluster biosynthesis. Its function is as follows. Master enzyme that delivers sulfur to a number of partners involved in Fe-S cluster assembly, tRNA modification or cofactor biosynthesis. Catalyzes the removal of elemental sulfur atoms from cysteine to produce alanine. Functions as a sulfur delivery protein for Fe-S cluster synthesis onto IscU, an Fe-S scaffold assembly protein, as well as other S acceptor proteins. The sequence is that of Cysteine desulfurase IscS from Shewanella sediminis (strain HAW-EB3).